Consider the following 330-residue polypeptide: Aspartate--ammonia ligase (330 aa).

It belongs to the class-II aminoacyl-tRNA synthetase family. AsnA subfamily.

The protein resides in the cytoplasm. It catalyses the reaction L-aspartate + NH4(+) + ATP = L-asparagine + AMP + diphosphate + H(+). It functions in the pathway amino-acid biosynthesis; L-asparagine biosynthesis; L-asparagine from L-aspartate (ammonia route): step 1/1. This chain is Aspartate--ammonia ligase, found in Serratia proteamaculans (strain 568).